The primary structure comprises 311 residues: Cyclin-dependent kinase B1-2 (311 aa).

A Protein kinase domain is found at 4-303 (YEKLEKVGEG…AKAALDHPYF (300 aa)). ATP is bound by residues 10–18 (VGEGTYGKV) and Lys-33. Residue Tyr-15 is modified to Phosphotyrosine. The active-site Proton acceptor is Asp-144. Position 178 is a phosphothreonine (Thr-178).

It belongs to the protein kinase superfamily. CMGC Ser/Thr protein kinase family. CDC2/CDKX subfamily. As to quaternary structure, interacts with CKS1. In terms of tissue distribution, expressed in flowers.

It catalyses the reaction L-seryl-[protein] + ATP = O-phospho-L-seryl-[protein] + ADP + H(+). The enzyme catalyses L-threonyl-[protein] + ATP = O-phospho-L-threonyl-[protein] + ADP + H(+). It carries out the reaction [DNA-directed RNA polymerase] + ATP = phospho-[DNA-directed RNA polymerase] + ADP + H(+). Together with CDKB1-1, promotes both the last division in the stomatal cell lineage as well as the number of stomata. In collaboration with MYB124 and MYB88, restrict the G1/S transition and chloroplast and nuclear number during stomatal formation, and normally maintain fate and developmental progression throughout the stomatal cell lineage. This Arabidopsis thaliana (Mouse-ear cress) protein is Cyclin-dependent kinase B1-2 (CDKB1-2).